A 593-amino-acid chain; its full sequence is MNVLKRGSDQDNWWQAYPGLYARELAAYEGHGASHRPLIQQDGTLILEVLWPMDSAGSIRLNVGYSPLHPFCRPSISAPELQLERHQNPFTRDLCLLTQDSAQWYPHQMVADFIAERLSQVLQVMTLRRNEQWSEAASLEEQAPDPVTPYHMHVAEEYSAVFFDGQQTVPNAPLGTAVFLLQDRLERGRSPPFQAILSKVEPLSGTWMAKPFDLPKRAGPWKNVIGRWIRLEPPFPEAPEEILAAAEKAIERQSALFPAHLKKLGSIADDDLSITAVVFQEELSYGPDNKGNGWFFLVSRRVPGSRRRQVSLVRGYRLSSDMLSRLPVASALKSKKVVLVGCGAIGSFAAVELARSGVGQLTIIDFDLVEPGNTVRWALGRSVWGLPKTTALHDFLYHNYPWTNVGRGHAKVGSAISNVDDVRKLEGNPMRWLRALIEDADIVVDTSASTECQGALAYMCRSIGKRYVLGHATEGAAGGVVARFKPGAPGCYVCLQQHWSGKTLPLPTIDSSGTIVPTGCNAPTFTGGAFDLQEVSMEVVRSTIGLLAPDVYDSGDWQLSILDLTENGRRILPRWKAETIAPHSSCSCGASQG.

This is an uncharacterized protein from Sinorhizobium fredii (strain NBRC 101917 / NGR234).